A 504-amino-acid chain; its full sequence is Cytochrome P450 7A1 (504 aa).

A helical transmembrane segment spans residues 4–24; it reads TSLIWGIAIAACCCLWLILGI. Heme is bound at residue Cys-444.

The protein belongs to the cytochrome P450 family. Requires heme as cofactor. As to expression, detected in liver.

It localises to the endoplasmic reticulum membrane. It is found in the microsome membrane. The enzyme catalyses cholesterol + reduced [NADPH--hemoprotein reductase] + O2 = 7alpha-hydroxycholesterol + oxidized [NADPH--hemoprotein reductase] + H2O + H(+). It carries out the reaction 4beta-hydroxycholesterol + reduced [NADPH--hemoprotein reductase] + O2 = 4beta,7alpha-dihydroxycholesterol + oxidized [NADPH--hemoprotein reductase] + H2O + H(+). The catalysed reaction is lathosterol + reduced [NADPH--hemoprotein reductase] + O2 = 7alpha,8alpha-epoxy-5alpha-cholestan-3beta-ol + oxidized [NADPH--hemoprotein reductase] + H2O + H(+). It catalyses the reaction lathosterol + reduced [NADPH--hemoprotein reductase] + O2 = 5alpha-cholestan-7-oxo-3beta-ol + oxidized [NADPH--hemoprotein reductase] + H2O + H(+). The enzyme catalyses 7-dehydrocholesterol + reduced [NADPH--hemoprotein reductase] + O2 = 7-oxocholesterol + oxidized [NADPH--hemoprotein reductase] + H2O + H(+). It carries out the reaction (24S)-hydroxycholesterol + reduced [NADPH--hemoprotein reductase] + O2 = (24S)-7alpha-dihydroxycholesterol + oxidized [NADPH--hemoprotein reductase] + H2O + H(+). The catalysed reaction is (24R)-hydroxycholesterol + reduced [NADPH--hemoprotein reductase] + O2 = (24R)-7alpha-dihydroxycholesterol + oxidized [NADPH--hemoprotein reductase] + H2O + H(+). The protein operates within lipid metabolism; bile acid biosynthesis. It functions in the pathway steroid metabolism; cholesterol degradation. Its function is as follows. A cytochrome P450 monooxygenase involved in the metabolism of endogenous cholesterol and its oxygenated derivatives (oxysterols). Mechanistically, uses molecular oxygen inserting one oxygen atom into a substrate, and reducing the second into a water molecule, with two electrons provided by NADPH via cytochrome P450 reductase (CPR; NADPH-ferrihemoprotein reductase). Functions as a critical regulatory enzyme of bile acid biosynthesis and cholesterol homeostasis. Catalyzes the hydroxylation of carbon hydrogen bond at 7-alpha position of cholesterol, a rate-limiting step in cholesterol catabolism and bile acid biosynthesis. 7-alpha hydroxylates several oxysterols, including 4beta-hydroxycholesterol and 24-hydroxycholesterol. Catalyzes the oxidation of the 7,8 double bond of 7-dehydrocholesterol and lathosterol with direct and predominant formation of the 7-keto derivatives. This Homo sapiens (Human) protein is Cytochrome P450 7A1.